Consider the following 289-residue polypeptide: G1/S-specific cyclin-D2 (289 aa).

The Cyclin N-terminal domain maps to V26 to L151. Positions D264–L289 are disordered. Phosphoserine is present on S271. Position 280 is a phosphothreonine (T280).

This sequence belongs to the cyclin family. Cyclin D subfamily. As to quaternary structure, interacts with either CDK4 or CDK6 protein kinase to form a serine/threonine kinase holoenzyme complex. The cyclin subunit imparts substrate specificity to the complex. Phosphorylation at Thr-280 by MAP kinases is required for ubiquitination and degradation by the DCX(AMBRA1) complex. In terms of processing, ubiquitinated by the DCX(AMBRA1) complex during the transition from G1 to S cell phase, leading to its degradation: ubiquitination is dependent on Thr-280 phosphorylation. The DCX(AMBRA1) complex represents the major regulator of CCND2 stability during the G1/S transition. Polyubiquitinated by the SCF(FBXL2) complex, leading to proteasomal degradation.

Its subcellular location is the nucleus. The protein localises to the cytoplasm. It is found in the nucleus membrane. Functionally, regulatory component of the cyclin D2-CDK4 (DC) complex that phosphorylates and inhibits members of the retinoblastoma (RB) protein family including RB1 and regulates the cell-cycle during G(1)/S transition. Phosphorylation of RB1 allows dissociation of the transcription factor E2F from the RB/E2F complex and the subsequent transcription of E2F target genes which are responsible for the progression through the G(1) phase. Hypophosphorylates RB1 in early G(1) phase. Cyclin D-CDK4 complexes are major integrators of various mitogenenic and antimitogenic signals. The polypeptide is G1/S-specific cyclin-D2 (Homo sapiens (Human)).